A 279-amino-acid polypeptide reads, in one-letter code: Dermonecrotic toxin StSicTox-betaIB1i (279 aa).

Residue His-12 is part of the active site. Mg(2+) is bound by residues Glu-32 and Asp-34. Catalysis depends on His-48, which acts as the Nucleophile. 2 disulfides stabilise this stretch: Cys-52–Cys-58 and Cys-54–Cys-198. Asp-92 is a Mg(2+) binding site.

It belongs to the arthropod phospholipase D family. Class II subfamily. Class IIb sub-subfamily. Mg(2+) is required as a cofactor. In terms of tissue distribution, expressed by the venom gland.

It localises to the secreted. It catalyses the reaction an N-(acyl)-sphingosylphosphocholine = an N-(acyl)-sphingosyl-1,3-cyclic phosphate + choline. The enzyme catalyses N-hexanoyl-sphing-4-enine-1-phosphocholine = N-(hexanoyl)-sphing-4-enine-1,3-cyclic phosphate + choline. The catalysed reaction is an N-(acyl)-sphingosylphosphoethanolamine = an N-(acyl)-sphingosyl-1,3-cyclic phosphate + ethanolamine. It carries out the reaction N-dodecanoyl-heptadecasphing-4-enine-1-phosphoethanolamine = N-dodecanoyl-heptadecasphing-4-enine-1,3-cyclic phosphate + ethanolamine. It catalyses the reaction a 1-acyl-sn-glycero-3-phosphoethanolamine = a 1-acyl-sn-glycero-2,3-cyclic phosphate + ethanolamine. The enzyme catalyses 1-tetradecanoyl-sn-glycero-3-phosphoethanolamine = 1-tetradecanoyl-sn-glycero-2,3-cyclic phosphate + ethanolamine. Dermonecrotic toxins cleave the phosphodiester linkage between the phosphate and headgroup of certain phospholipids (sphingolipid and lysolipid substrates), forming an alcohol (often choline) and a cyclic phosphate. This toxin acts on lysophosphatidylethanolamine (LPE) and ceramide phosphoethanolamine (CPE) with high activity. This toxin acts on sphingomyelin (SM) with very low activity and is not active on lysophosphatidylserine (LPS), lysophosphatidylcholine (LPC) and lysophosphatidylglycerol (LPG). It acts by transphosphatidylation, releasing exclusively cyclic phosphate as second products. It is not surprising that spider toxins have affinity for ethanolamine-containing sphingolipids since they are common in insect prey. Induces dermonecrosis, hemolysis, increased vascular permeability, edema, inflammatory response, and platelet aggregation. This chain is Dermonecrotic toxin StSicTox-betaIB1i, found in Sicarius terrosus (Cave spider).